The following is a 342-amino-acid chain: Putative glycosyltransferases (342 aa).

A run of 2 helical transmembrane segments spans residues 227–247 and 262–282; these read IFYL…YLII and VIVS…LVGI.

It belongs to the glycosyltransferase 2 family.

It localises to the cell membrane. In terms of biological role, may play only a redundant role in maintaining cell wall viability and bacterial virulence. The polypeptide is Putative glycosyltransferases (pimF) (Mycobacterium tuberculosis (strain CDC 1551 / Oshkosh)).